A 147-amino-acid chain; its full sequence is 3-dehydroquinate dehydratase (147 aa).

Tyrosine 23 functions as the Proton acceptor in the catalytic mechanism. Asparagine 74, histidine 80, and aspartate 87 together coordinate substrate. Histidine 100 (proton donor) is an active-site residue. Substrate is bound by residues leucine 101–serine 102 and arginine 111.

This sequence belongs to the type-II 3-dehydroquinase family. In terms of assembly, homododecamer.

The enzyme catalyses 3-dehydroquinate = 3-dehydroshikimate + H2O. It participates in metabolic intermediate biosynthesis; chorismate biosynthesis; chorismate from D-erythrose 4-phosphate and phosphoenolpyruvate: step 3/7. Its function is as follows. Catalyzes a trans-dehydration via an enolate intermediate. This is 3-dehydroquinate dehydratase from Clostridium botulinum (strain Okra / Type B1).